A 317-amino-acid chain; its full sequence is Adenosine receptor A3 (317 aa).

The Extracellular segment spans residues 1 to 14; that stretch reads MPVNSTAVSWTSVT. N-linked (GlcNAc...) asparagine glycosylation occurs at asparagine 4. The helical transmembrane segment at 15 to 37 threads the bilayer; it reads YITVEILIGLCAIVGNVLVIWVV. The Cytoplasmic segment spans residues 38-48; the sequence is KLNPSLQTTTF. A helical transmembrane segment spans residues 49-72; the sequence is YFIVSLALADIAVGVLVMPLAIVI. Over 73 to 84 the chain is Extracellular; it reads SLGVTIHFYSCL. A disulfide bond links cysteine 83 and cysteine 165. The chain crosses the membrane as a helical span at residues 85–106; it reads FMTCLMLIFTHASIMSLLAIAV. Over 107–126 the chain is Cytoplasmic; that stretch reads DRYLRVKLTVRYRRVTTQRR. A helical transmembrane segment spans residues 127 to 148; that stretch reads IWLALGLCWLVSFLVGLTPMFG. The Extracellular segment spans residues 149–176; it reads WNMKLSSADENLTFLPCRFRSVMRMDYM. Asparagine 159 carries N-linked (GlcNAc...) asparagine glycosylation. Residues 177-197 traverse the membrane as a helical segment; that stretch reads VYFSFFLWILVPLVVMCAIYF. Over 198–230 the chain is Cytoplasmic; sequence DIFYIIRNRLSQSFSGSRETGAFYGREFKTAKS. The chain crosses the membrane as a helical span at residues 231–254; the sequence is LLLVLFLFALCWLPLSIINCILYF. Over 255 to 260 the chain is Extracellular; it reads DGQVPQ. A helical membrane pass occupies residues 261–283; it reads TVLYLGILLSHANSMMNPIVYAY. The Cytoplasmic portion of the chain corresponds to 284 to 317; the sequence is KIKKFKETYLLILKACVMCQPSKSMDPSTEQTSE. The S-palmitoyl cysteine moiety is linked to residue cysteine 302.

It belongs to the G-protein coupled receptor 1 family. Post-translationally, phosphorylation on Thr-315 and Ser-316 may be crucial for rapid desensitization. Phosphorylation on Thr-315 may be necessary for phosphorylation on Ser-316 to occur. As to expression, most abundant in lung, spleen and pineal gland. Moderate expression in brain, kidney and testis.

The protein resides in the cell membrane. Receptor for adenosine. The activity of this receptor is mediated by G proteins which inhibits adenylyl cyclase. The protein is Adenosine receptor A3 (ADORA3) of Ovis aries (Sheep).